We begin with the raw amino-acid sequence, 139 residues long: Large ribosomal subunit protein uL16 (139 aa).

A compositionally biased stretch (basic residues) spans 1 to 11 (MLQPKRTKYRK). The tract at residues 1–30 (MLQPKRTKYRKPFLQSHDKRKAHKGNKVSF) is disordered.

The protein belongs to the universal ribosomal protein uL16 family. In terms of assembly, part of the 50S ribosomal subunit.

Binds 23S rRNA and is also seen to make contacts with the A and possibly P site tRNAs. The chain is Large ribosomal subunit protein uL16 from Mycoplasmopsis synoviae (strain 53) (Mycoplasma synoviae).